A 188-amino-acid chain; its full sequence is Adenine phosphoribosyltransferase (188 aa).

Belongs to the purine/pyrimidine phosphoribosyltransferase family. In terms of assembly, homodimer.

The protein resides in the cytoplasm. The catalysed reaction is AMP + diphosphate = 5-phospho-alpha-D-ribose 1-diphosphate + adenine. It functions in the pathway purine metabolism; AMP biosynthesis via salvage pathway; AMP from adenine: step 1/1. Catalyzes a salvage reaction resulting in the formation of AMP, that is energically less costly than de novo synthesis. In Salinispora arenicola (strain CNS-205), this protein is Adenine phosphoribosyltransferase.